Consider the following 291-residue polypeptide: MDIFSEILPLREQIKAWKREGKRIAFVPTMGNLHEGHLTLIRTAREHADIVVASIFVNPMQFNNADDLTNYPRTLDEDVEKLTAENVDLVFTPTPEIMYPEGLEKQTTVDVPVISTILEGASRPGHFKGVSTVVNKLFNIVQPDVACFGEKDFQQLALIRQMVIDMALDVEIVGVPTVREMDGLAMSSRNNLLTLNERQRAPVLARTMRWISSQMRGGRNDYLSLIEDASDQLRAADLQPDEIFIRDARTLQEPTEETTQAIILMAAFLGQVRLIDNLVVELAAASNDEEE.

30-37 (MGNLHEGH) is a binding site for ATP. Residue His37 is the Proton donor of the active site. Residue Gln61 participates in (R)-pantoate binding. Position 61 (Gln61) interacts with beta-alanine. 149–152 (GEKD) provides a ligand contact to ATP. Residue Gln155 participates in (R)-pantoate binding. ATP contacts are provided by residues Val178 and 186–189 (MSSR).

This sequence belongs to the pantothenate synthetase family. In terms of assembly, homodimer.

Its subcellular location is the cytoplasm. The enzyme catalyses (R)-pantoate + beta-alanine + ATP = (R)-pantothenate + AMP + diphosphate + H(+). The protein operates within cofactor biosynthesis; (R)-pantothenate biosynthesis; (R)-pantothenate from (R)-pantoate and beta-alanine: step 1/1. Functionally, catalyzes the condensation of pantoate with beta-alanine in an ATP-dependent reaction via a pantoyl-adenylate intermediate. This Aliivibrio fischeri (strain ATCC 700601 / ES114) (Vibrio fischeri) protein is Pantothenate synthetase.